A 461-amino-acid chain; its full sequence is Ribulose bisphosphate carboxylase (461 aa).

Asn-112 is a binding site for substrate. Lys-167 functions as the Proton acceptor in the catalytic mechanism. Lys-169 serves as a coordination point for substrate. Mg(2+)-binding residues include Lys-192, Asp-194, and Glu-195. Lys-192 is modified (N6-carboxylysine). The active-site Proton acceptor is the His-288. Residues Arg-289, His-322, and Ser-369 each contribute to the substrate site.

Belongs to the RuBisCO large chain family. Type II subfamily. In terms of assembly, homodimer. Requires Mg(2+) as cofactor.

The catalysed reaction is 2 (2R)-3-phosphoglycerate + 2 H(+) = D-ribulose 1,5-bisphosphate + CO2 + H2O. It carries out the reaction D-ribulose 1,5-bisphosphate + O2 = 2-phosphoglycolate + (2R)-3-phosphoglycerate + 2 H(+). Its function is as follows. RuBisCO catalyzes two reactions: the carboxylation of D-ribulose 1,5-bisphosphate, the primary event in carbon dioxide fixation, as well as the oxidative fragmentation of the pentose substrate. Both reactions occur simultaneously and in competition at the same active site. This is Ribulose bisphosphate carboxylase from Rhodopseudomonas palustris (strain BisB18).